A 155-amino-acid chain; its full sequence is Large ribosomal subunit protein uL13 (155 aa).

It belongs to the universal ribosomal protein uL13 family. Part of the 50S ribosomal subunit.

In terms of biological role, this protein is one of the early assembly proteins of the 50S ribosomal subunit, although it is not seen to bind rRNA by itself. It is important during the early stages of 50S assembly. The polypeptide is Large ribosomal subunit protein uL13 (Rickettsia bellii (strain OSU 85-389)).